We begin with the raw amino-acid sequence, 209 residues long: Orotate phosphoribosyltransferase (209 aa).

5-phospho-alpha-D-ribose 1-diphosphate-binding positions include R96, K100, H102, and 122–130; that span reads EDLISTGGS. S126 is a binding site for orotate.

It belongs to the purine/pyrimidine phosphoribosyltransferase family. PyrE subfamily. Homodimer. Mg(2+) serves as cofactor.

The catalysed reaction is orotidine 5'-phosphate + diphosphate = orotate + 5-phospho-alpha-D-ribose 1-diphosphate. The protein operates within pyrimidine metabolism; UMP biosynthesis via de novo pathway; UMP from orotate: step 1/2. Its function is as follows. Catalyzes the transfer of a ribosyl phosphate group from 5-phosphoribose 1-diphosphate to orotate, leading to the formation of orotidine monophosphate (OMP). This Listeria innocua serovar 6a (strain ATCC BAA-680 / CLIP 11262) protein is Orotate phosphoribosyltransferase.